The following is a 201-amino-acid chain: Cytochrome c4 (201 aa).

Positions 1–20 are cleaved as a signal peptide; it reads MNKLLVSLLLTLGLTGLAHA. Heme c is bound by residues C34, C37, H38, M77, C130, C133, H134, and M178.

Binds 2 heme c groups covalently per subunit.

Its subcellular location is the periplasm. Functionally, diheme, high potential cytochrome c believed to be an intermediate electron donor to terminal oxidation systems. In Pseudomonas aeruginosa (strain ATCC 15692 / DSM 22644 / CIP 104116 / JCM 14847 / LMG 12228 / 1C / PRS 101 / PAO1), this protein is Cytochrome c4 (cc4).